The chain runs to 198 residues: MAEKENTKRNRREEILQALAQMLESSDGSQRITTAKLAANVGVSEAALYRHFPSKTRMFDSLIEFIEDSLMSRINLILQDEKETFNRLRLILLLVLGFAERNPGLTRIMTGHALMFEQDRLQGRINQLFERIEMQLRQVLREKKLRDGQGFIHDEALLATQLLAFCEGMLSRFVRSEFRYCPTQEFDSRWPLIVAQLQ.

One can recognise an HTH tetR-type domain in the interval 9–70; sequence RNRREEILQA…SLIEFIEDSL (62 aa). The segment at residues 33–52 is a DNA-binding region (H-T-H motif); that stretch reads TTAKLAANVGVSEAALYRHF. A coiled-coil region spans residues 119-144; it reads DRLQGRINQLFERIEMQLRQVLREKK.

Belongs to the nucleoid occlusion factor SlmA family. As to quaternary structure, homodimer. Interacts with FtsZ.

The protein resides in the cytoplasm. Its subcellular location is the nucleoid. Functionally, required for nucleoid occlusion (NO) phenomenon, which prevents Z-ring formation and cell division over the nucleoid. Acts as a DNA-associated cell division inhibitor that binds simultaneously chromosomal DNA and FtsZ, and disrupts the assembly of FtsZ polymers. SlmA-DNA-binding sequences (SBS) are dispersed on non-Ter regions of the chromosome, preventing FtsZ polymerization at these regions. This is Nucleoid occlusion factor SlmA from Yersinia pseudotuberculosis serotype I (strain IP32953).